The sequence spans 314 residues: Homoserine kinase (314 aa).

96-106 (PIGSGLGSSAC) contacts ATP.

The protein belongs to the GHMP kinase family. Homoserine kinase subfamily.

The protein localises to the cytoplasm. It catalyses the reaction L-homoserine + ATP = O-phospho-L-homoserine + ADP + H(+). Its pathway is amino-acid biosynthesis; L-threonine biosynthesis; L-threonine from L-aspartate: step 4/5. In terms of biological role, catalyzes the ATP-dependent phosphorylation of L-homoserine to L-homoserine phosphate. The protein is Homoserine kinase of Histophilus somni (strain 129Pt) (Haemophilus somnus).